The primary structure comprises 425 residues: MVNEYKRIVLLRGLECINKHYFSLFKSLLARDLNLERDNQEQYTTIQIANMMEEKFPADSGLGKLIEFCEEVPALRKRAEILKKERSEVTGETSLEKNGQEAGPATPTSTTSHMLASERGETSATQEETSTAQAGTSTAQAGTSTAQAGTSTAQKRKSMREEETGVKKSKAAKEPDQPPCCEEPTAMCQSPILHSSSSASSNILSAKNQKSQPQNQNIPRGAVLHSEPLTVMVLTATDPFEYESPEHEVKNMFHATVATVSQYFHVKVFNIDLKEKFTKNNFITISNYFESKGILEINETSSVLEAAPKQMIEVPNCITRNANASPKICDIQKGTSGTVFYGVFTLHKKKVKTQNTSYEIKDGSGSIEVVGSGQWHNINCKEGDKLHLFCFHLKRERGQPKLVCGDHSFVKVTKAGKKKEASTVQ.

The 88-residue stretch at 1-88 (MVNEYKRIVL…AEILKKERSE (88 aa)) folds into the Pyrin domain. The segment covering 86-99 (RSEVTGETSLEKNG) has biased composition (basic and acidic residues). Residues 86–223 (RSEVTGETSL…QNQNIPRGAV (138 aa)) are disordered. Residues 122–153 (TSATQEETSTAQAGTSTAQAGTSTAQAGTSTA) show a composition bias toward low complexity. Repeat copies occupy residues 129–135 (TSTAQAG), 136–142 (TSTAQAG), 143–149 (TSTAQAG), and 150–156 (TSTAQKR). A 4 X 7 AA tandem repeats of T-S-T-A-Q-A-[GR] region spans residues 129–177 (TSTAQAGTSTAQAGTSTAQAGTSTAQKRKSMREEETGVKKSKAAKEPDQ). Residues 159 to 176 (MREEETGVKKSKAAKEPD) are compositionally biased toward basic and acidic residues. Positions 190-206 (SPILHSSSSASSNILSA) are enriched in low complexity. Residues 207–218 (KNQKSQPQNQNI) are compositionally biased toward polar residues. The 201-residue stretch at 213-413 (PQNQNIPRGA…CGDHSFVKVT (201 aa)) folds into the HIN-200 domain.

It belongs to the HIN-200 family. Interacts with HOXB2. Mononuclear phagocytes.

The protein resides in the nucleus. Inhibits cell growth via p53/TP53 and RB1-dependent and independent pathways. May work in synergy with TP53 to promote the transcription of CDKN1A/P21. The polypeptide is Interferon-activable protein 211 (Mus musculus (Mouse)).